Consider the following 389-residue polypeptide: G2/M cell-cycle inhibitor DR6 (389 aa).

This sequence belongs to the Roseolovirus DR6 family.

The protein localises to the host nucleus. Functionally, inhibits the host G2/M cell-cycle progression in a p53-independent manner. The sequence is that of G2/M cell-cycle inhibitor DR6 (DR6L) from Homo sapiens (Human).